The sequence spans 343 residues: Protein RecA (343 aa).

66–73 (GPESSGKT) lines the ATP pocket. The disordered stretch occupies residues 319-343 (IERQIREKHLPKRSAKADEAESAEA).

Belongs to the RecA family.

It is found in the cytoplasm. In terms of biological role, can catalyze the hydrolysis of ATP in the presence of single-stranded DNA, the ATP-dependent uptake of single-stranded DNA by duplex DNA, and the ATP-dependent hybridization of homologous single-stranded DNAs. It interacts with LexA causing its activation and leading to its autocatalytic cleavage. In Thioalkalivibrio sulfidiphilus (strain HL-EbGR7), this protein is Protein RecA.